A 101-amino-acid chain; its full sequence is Putative antitoxin HigA2 (101 aa).

The HTH cro/C1-type domain maps to 35–90 (LRELRAAQSLTQVQVAALAHIRQSRVSSIENGDIGSAQVNTLRKYVSALGGELDIT). Positions 46–65 (QVQVAALAHIRQSRVSSIEN) form a DNA-binding region, H-T-H motif.

In terms of biological role, putative antitoxin component of a type II toxin-antitoxin (TA) system. Its cognate toxin would be HigB2. This Mycobacterium tuberculosis (strain ATCC 25618 / H37Rv) protein is Putative antitoxin HigA2.